The sequence spans 181 residues: Inner membrane-spanning protein YciB (181 aa).

The next 5 helical transmembrane spans lie at 19–39 (FFDI…QLIA), 50–70 (MHLI…IFHD), 80–100 (IVYA…KPIL), 118–138 (LTWY…YVAF), and 148–168 (FKVF…VVYL).

Belongs to the YciB family.

It is found in the cell inner membrane. In terms of biological role, plays a role in cell envelope biogenesis, maintenance of cell envelope integrity and membrane homeostasis. The protein is Inner membrane-spanning protein YciB of Shewanella amazonensis (strain ATCC BAA-1098 / SB2B).